A 255-amino-acid chain; its full sequence is Type III pantothenate kinase (255 aa).

6–13 is an ATP binding site; that stretch reads DVGNTNTV. Residues Y100 and 107–110 each bind substrate; that span reads GADR. D109 acts as the Proton acceptor in catalysis. D129 contributes to the K(+) binding site. T132 is a binding site for ATP. Residue T184 coordinates substrate.

It belongs to the type III pantothenate kinase family. In terms of assembly, homodimer. Requires NH4(+) as cofactor. It depends on K(+) as a cofactor.

Its subcellular location is the cytoplasm. It catalyses the reaction (R)-pantothenate + ATP = (R)-4'-phosphopantothenate + ADP + H(+). It participates in cofactor biosynthesis; coenzyme A biosynthesis; CoA from (R)-pantothenate: step 1/5. Its function is as follows. Catalyzes the phosphorylation of pantothenate (Pan), the first step in CoA biosynthesis. The chain is Type III pantothenate kinase from Acetivibrio thermocellus (strain ATCC 27405 / DSM 1237 / JCM 9322 / NBRC 103400 / NCIMB 10682 / NRRL B-4536 / VPI 7372) (Clostridium thermocellum).